The primary structure comprises 254 residues: MTQAFTVVIPARYASTRLPGKPLQDIAGQPMIQRVWNQARKSAASRVVVATDDERILAACQGFGAEALLTRAEHNSGTDRLEEVASRLGLASDAIVVNVQGDEPLIPPALIDQVAANLAAHPEAAIATLAEPIHEVSALFNPNVVKVATDIDGLALTFSRAPLPWARDAFARDRDSLPEGVPYRRHIGIYAYRVGFLADFVAWGPCWLENAESLEQLRALWHGVRIHVADARETMLPGVDTPEDLERVRRVLGD.

Belongs to the KdsB family.

It is found in the cytoplasm. It carries out the reaction 3-deoxy-alpha-D-manno-oct-2-ulosonate + CTP = CMP-3-deoxy-beta-D-manno-octulosonate + diphosphate. The protein operates within nucleotide-sugar biosynthesis; CMP-3-deoxy-D-manno-octulosonate biosynthesis; CMP-3-deoxy-D-manno-octulosonate from 3-deoxy-D-manno-octulosonate and CTP: step 1/1. It participates in bacterial outer membrane biogenesis; lipopolysaccharide biosynthesis. Activates KDO (a required 8-carbon sugar) for incorporation into bacterial lipopolysaccharide in Gram-negative bacteria. This is 3-deoxy-manno-octulosonate cytidylyltransferase from Pseudomonas aeruginosa (strain UCBPP-PA14).